We begin with the raw amino-acid sequence, 656 residues long: Very long-chain specific acyl-CoA dehydrogenase, mitochondrial (656 aa).

Residues 1 to 33 (MQSARMTPSVGRQLLRLGARSSRSTTVLQGQPR) form a disordered region. The N-terminal 41 residues, 1–41 (MQSARMTPSVGRQLLRLGARSSRSTTVLQGQPRPISAQRLY), are a transit peptide targeting the mitochondrion. Positions 42 to 483 (AREATQAVLD…ALQGCMDKGK (442 aa)) are catalytic. N6-acetyllysine is present on lysine 52. Residues lysine 72 and lysine 128 each carry the N6-acetyllysine; alternate modification. 2 positions are modified to N6-succinyllysine; alternate: lysine 72 and lysine 128. An N6-succinyllysine modification is found at lysine 196. 215 to 224 (FCLTEPSSGS) contacts FAD. At cysteine 238 the chain carries S-nitrosocysteine. At lysine 240 the chain carries N6-acetyllysine; alternate. Lysine 240 bears the N6-succinyllysine; alternate mark. 250–252 (WIS) contributes to the FAD binding site. Residue lysine 269 is modified to N6-succinyllysine. 2 positions are modified to N6-acetyllysine; alternate: lysine 277 and lysine 279. N6-succinyllysine; alternate is present on residues lysine 277 and lysine 279. Lysine 299 and lysine 317 each carry N6-acetyllysine. Lysine 332 is modified (N6-acetyllysine; alternate). Lysine 332 bears the N6-succinyllysine; alternate mark. Lysine 373 is modified (N6-succinyllysine). Residue 462-464 (FEG) coordinates substrate. Glutamate 463 functions as the Proton acceptor in the catalytic mechanism. 465 to 467 (AND) contacts FAD. Lysine 483 is subject to N6-acetyllysine; alternate. Lysine 483 bears the N6-succinyllysine; alternate mark. The interval 484 to 517 (ELTGLGNALKNPFGNVGLLMGEAGKQLRRRTGIG) is membrane-anchoring. 2 positions are modified to phosphoserine: serine 518 and serine 523. Lysine 551 carries the N6-acetyllysine modification. Residue lysine 557 is modified to N6-acetyllysine; alternate. Lysine 557 carries the post-translational modification N6-succinyllysine; alternate. Glutamine 563 provides a ligand contact to FAD. Residue lysine 640 is modified to N6-succinyllysine.

It belongs to the acyl-CoA dehydrogenase family. As to quaternary structure, homodimer. Homodimerizes after import into the mitochondrion. The cofactor is FAD. In terms of processing, S-nitrosylation at Cys-238 in liver improves catalytic efficiency.

It is found in the mitochondrion inner membrane. The catalysed reaction is a very-long-chain 2,3-saturated fatty acyl-CoA + oxidized [electron-transfer flavoprotein] + H(+) = a very-long-chain (2E)-enoyl-CoA + reduced [electron-transfer flavoprotein]. It carries out the reaction dodecanoyl-CoA + oxidized [electron-transfer flavoprotein] + H(+) = (2E)-dodecenoyl-CoA + reduced [electron-transfer flavoprotein]. The enzyme catalyses tetradecanoyl-CoA + oxidized [electron-transfer flavoprotein] + H(+) = (2E)-tetradecenoyl-CoA + reduced [electron-transfer flavoprotein]. It catalyses the reaction oxidized [electron-transfer flavoprotein] + hexadecanoyl-CoA + H(+) = (2E)-hexadecenoyl-CoA + reduced [electron-transfer flavoprotein]. The catalysed reaction is octadecanoyl-CoA + oxidized [electron-transfer flavoprotein] + H(+) = (2E)-octadecenoyl-CoA + reduced [electron-transfer flavoprotein]. It carries out the reaction eicosanoyl-CoA + oxidized [electron-transfer flavoprotein] + H(+) = (2E)-eicosenoyl-CoA + reduced [electron-transfer flavoprotein]. The enzyme catalyses docosanoyl-CoA + oxidized [electron-transfer flavoprotein] + H(+) = (2E)-docosenoyl-CoA + reduced [electron-transfer flavoprotein]. It catalyses the reaction tetracosanoyl-CoA + oxidized [electron-transfer flavoprotein] + H(+) = (2E)-tetracosenoyl-CoA + reduced [electron-transfer flavoprotein]. It participates in lipid metabolism; mitochondrial fatty acid beta-oxidation. Functionally, very long-chain specific acyl-CoA dehydrogenase is one of the acyl-CoA dehydrogenases that catalyze the first step of mitochondrial fatty acid beta-oxidation, an aerobic process breaking down fatty acids into acetyl-CoA and allowing the production of energy from fats. The first step of fatty acid beta-oxidation consists in the removal of one hydrogen from C-2 and C-3 of the straight-chain fatty acyl-CoA thioester, resulting in the formation of trans-2-enoyl-CoA. Among the different mitochondrial acyl-CoA dehydrogenases, very long-chain specific acyl-CoA dehydrogenase acts specifically on acyl-CoAs with saturated 12 to 24 carbons long primary chains. The polypeptide is Very long-chain specific acyl-CoA dehydrogenase, mitochondrial (Mus musculus (Mouse)).